A 221-amino-acid polypeptide reads, in one-letter code: Phosphoribosylformylglycinamidine synthase subunit PurQ (221 aa).

The 220-residue stretch at 2–221 (KTAVIQFPGS…VFESLKTVKK (220 aa)) folds into the Glutamine amidotransferase type-1 domain. C87 acts as the Nucleophile in catalysis. Residues H195 and E197 contribute to the active site.

In terms of assembly, part of the FGAM synthase complex composed of 1 PurL, 1 PurQ and 2 PurS subunits.

The protein resides in the cytoplasm. It carries out the reaction N(2)-formyl-N(1)-(5-phospho-beta-D-ribosyl)glycinamide + L-glutamine + ATP + H2O = 2-formamido-N(1)-(5-O-phospho-beta-D-ribosyl)acetamidine + L-glutamate + ADP + phosphate + H(+). The catalysed reaction is L-glutamine + H2O = L-glutamate + NH4(+). It participates in purine metabolism; IMP biosynthesis via de novo pathway; 5-amino-1-(5-phospho-D-ribosyl)imidazole from N(2)-formyl-N(1)-(5-phospho-D-ribosyl)glycinamide: step 1/2. Part of the phosphoribosylformylglycinamidine synthase complex involved in the purines biosynthetic pathway. Catalyzes the ATP-dependent conversion of formylglycinamide ribonucleotide (FGAR) and glutamine to yield formylglycinamidine ribonucleotide (FGAM) and glutamate. The FGAM synthase complex is composed of three subunits. PurQ produces an ammonia molecule by converting glutamine to glutamate. PurL transfers the ammonia molecule to FGAR to form FGAM in an ATP-dependent manner. PurS interacts with PurQ and PurL and is thought to assist in the transfer of the ammonia molecule from PurQ to PurL. This is Phosphoribosylformylglycinamidine synthase subunit PurQ from Deinococcus radiodurans (strain ATCC 13939 / DSM 20539 / JCM 16871 / CCUG 27074 / LMG 4051 / NBRC 15346 / NCIMB 9279 / VKM B-1422 / R1).